Here is a 357-residue protein sequence, read N- to C-terminus: Endo-1,4-beta-xylanase Xyn11B (357 aa).

A signal peptide spans 1–27 (MKIFQNTKNVIVSIAWAAALCTSAVSA). The GH11 domain maps to 29-226 (TLTSNSTGTN…SRGSSDITVS (198 aa)). The active-site Nucleophile is Glu116. Glu213 (proton donor) is an active-site residue. The tract at residues 220–245 (SSDITVSQGGSSGGGNSSSSSSASGG) is disordered.

Belongs to the glycosyl hydrolase 11 (cellulase G) family.

The protein localises to the secreted. It carries out the reaction Endohydrolysis of (1-&gt;4)-beta-D-xylosidic linkages in xylans.. Its pathway is glycan degradation; xylan degradation. In terms of biological role, endo-acting xylanase which specifically cleaves internal linkages on the xylan backbone, releasing xylooligosaccharides. Is able to hydrolyze glucuronoxylan and the arabinoxylan from wheat. This is Endo-1,4-beta-xylanase Xyn11B (xyn11B) from Cellvibrio japonicus (Pseudomonas fluorescens subsp. cellulosa).